Reading from the N-terminus, the 437-residue chain is UDP-N-acetylmuramate--L-alanine ligase (437 aa).

Position 114 to 120 (114 to 120 (GTHGKTS)) interacts with ATP.

Belongs to the MurCDEF family.

It localises to the cytoplasm. It catalyses the reaction UDP-N-acetyl-alpha-D-muramate + L-alanine + ATP = UDP-N-acetyl-alpha-D-muramoyl-L-alanine + ADP + phosphate + H(+). The protein operates within cell wall biogenesis; peptidoglycan biosynthesis. Its function is as follows. Cell wall formation. This is UDP-N-acetylmuramate--L-alanine ligase from Lactobacillus acidophilus (strain ATCC 700396 / NCK56 / N2 / NCFM).